The chain runs to 95 residues: UPF0235 protein MS0322 (95 aa).

It belongs to the UPF0235 family.

The polypeptide is UPF0235 protein MS0322 (Mannheimia succiniciproducens (strain KCTC 0769BP / MBEL55E)).